Consider the following 359-residue polypeptide: Probable dual-specificity RNA methyltransferase RlmN (359 aa).

The active-site Proton acceptor is Glu91. The 233-residue stretch at 97-329 folds into the Radical SAM core domain; it reads QHYGHSVCVT…KKNGVNCVVR (233 aa). A disulfide bridge connects residues Cys104 and Cys340. The [4Fe-4S] cluster site is built by Cys111, Cys115, and Cys118. Residues 163 to 164, Ser195, 218 to 220, and Asn296 each bind S-adenosyl-L-methionine; these read GE and SLH. The active-site S-methylcysteine intermediate is Cys340.

It belongs to the radical SAM superfamily. RlmN family. Requires [4Fe-4S] cluster as cofactor.

It is found in the cytoplasm. It carries out the reaction adenosine(2503) in 23S rRNA + 2 reduced [2Fe-2S]-[ferredoxin] + 2 S-adenosyl-L-methionine = 2-methyladenosine(2503) in 23S rRNA + 5'-deoxyadenosine + L-methionine + 2 oxidized [2Fe-2S]-[ferredoxin] + S-adenosyl-L-homocysteine. It catalyses the reaction adenosine(37) in tRNA + 2 reduced [2Fe-2S]-[ferredoxin] + 2 S-adenosyl-L-methionine = 2-methyladenosine(37) in tRNA + 5'-deoxyadenosine + L-methionine + 2 oxidized [2Fe-2S]-[ferredoxin] + S-adenosyl-L-homocysteine. Functionally, specifically methylates position 2 of adenine 2503 in 23S rRNA and position 2 of adenine 37 in tRNAs. This chain is Probable dual-specificity RNA methyltransferase RlmN, found in Streptococcus pyogenes serotype M5 (strain Manfredo).